Here is a 59-residue protein sequence, read N- to C-terminus: UPF0434 protein GOX0764 (59 aa).

The protein belongs to the UPF0434 family.

The polypeptide is UPF0434 protein GOX0764 (Gluconobacter oxydans (strain 621H) (Gluconobacter suboxydans)).